Reading from the N-terminus, the 1038-residue chain is TonB-dependent receptor P39 (1038 aa).

An N-terminal signal peptide occupies residues 1-39; sequence MFKQKLKMKPKIKRNCTFSGLAFILMLLFSSFTVNNLNA. A TonB box motif is present at residues 120–127; that stretch reads DEVVVIGY. A TBDR plug domain is found at 131–243; that stretch reads KRADVIGAVG…ANGVVLITTK (113 aa). Residues 249–1038 enclose the TBDR beta-barrel domain; that stretch reads FPKMTVDYIS…EIVIGLNVEF (790 aa). The TonB C-terminal box motif lies at 1021 to 1038; sequence SLRYPNQTEIVIGLNVEF.

The protein belongs to the TonB-dependent receptor family.

It is found in the cell outer membrane. TonB-dependent receptor probably involved in ulvan degradation. Ulvan is the main polysaccharide component of the Ulvales (green seaweed) cell wall. It is composed of disaccharide building blocks comprising 3-sulfated rhamnose (Rha3S) linked to D-glucuronic acid (GlcA), L-iduronic acid (IduA), or D-xylose (Xyl). The TonB-dependent receptor may mediate transport of ulvan oligosaccharides from the surface of the outer membrane to the periplasm for subsequent degradation. The protein is TonB-dependent receptor P39 of Formosa agariphila (strain DSM 15362 / KCTC 12365 / LMG 23005 / KMM 3901 / M-2Alg 35-1).